Consider the following 500-residue polypeptide: Protein dcd1B (500 aa).

Positions 1-20 (MNLIKLFIICCLLISITVKS) are cleaved as a signal peptide. 6 N-linked (GlcNAc...) asparagine glycosylation sites follow: Asn284, Asn331, Asn441, Asn459, Asn474, and Asn475. A disordered region spans residues 464-500 (FSEQPPLPPPNNSSSSDSNSNSNSDSSSSSDSNSNSN). The span at 475 to 500 (NSSSSDSNSNSNSDSSSSSDSNSNSN) shows a compositional bias: low complexity.

The protein resides in the secreted. This is Protein dcd1B (dcd1B) from Dictyostelium discoideum (Social amoeba).